Reading from the N-terminus, the 375-residue chain is cAMP-dependent protein kinase regulatory subunit (375 aa).

The interval 28–142 (RFCADYFNER…SLYKSVSHNF (115 aa)) is dimerization and phosphorylation. Residues 41–50 (REEADDDGPR) are compositionally biased toward basic and acidic residues. The tract at residues 41–102 (REEADDDGPR…EPAAPFTRRT (62 aa)) is disordered. A compositionally biased stretch (polar residues) spans 64–82 (GSSSRSTDGSLFRSSFADT). Residues 83 to 97 (SSEGPGSASSEPAAP) are compositionally biased toward low complexity. At Ser103 the chain carries Phosphoserine. Residues 143–258 (LFGN…FLKE), Glu208, Arg217, 261–375 (ILSD…DPTK), Glu328, and Arg337 each bind 3',5'-cyclic AMP.

It belongs to the cAMP-dependent kinase regulatory chain family. In terms of assembly, tetramer, composed of 2 regulatory (R) and 2 catalytic (C) subunits. In the presence of cAMP it dissociates into 2 active monomeric C subunits and an R dimer.

The chain is cAMP-dependent protein kinase regulatory subunit (PKAR) from Yarrowia lipolytica (strain CLIB 122 / E 150) (Yeast).